The following is a 3011-amino-acid chain: Genome polyprotein (3011 aa).

S2 bears the N-acetylserine; by host mark. The interaction with STAT1 stretch occupies residues 2-23; it reads STIPKPQRKTKRNTNRRPQDVK. The tract at residues 2-58 is interaction with EIF2AK2/PKR; sequence STIPKPQRKTKRNTNRRPQDVKFPGGGQIVGGVYLLPRRGPRLGVRATRKTSERSQP. The segment at 2-59 is interaction with DDX3X; sequence STIPKPQRKTKRNTNRRPQDVKFPGGGQIVGGVYLLPRRGPRLGVRATRKTSERSQPR. The tract at residues 2-75 is disordered; that stretch reads STIPKPQRKT…PKVRRPEGRT (74 aa). Residues 2–168 lie on the Cytoplasmic side of the membrane; that stretch reads STIPKPQRKT…EDGVNYATGN (167 aa). Short sequence motifs (nuclear localization signal) lie at residues 5–13 and 38–43; these read PKPQRKTKR and PRRGPR. A compositionally biased stretch (basic residues) spans 7–16; the sequence is PQRKTKRNTN. Positions 32 to 47 are enriched in low complexity; sequence GGVYLLPRRGPRLGVR. S53 is subject to Phosphoserine; by host. Short sequence motifs (nuclear localization signal) lie at residues 58-64 and 66-71; these read PRGRRQP and PKVRRP. A compositionally biased stretch (basic residues) spans 58 to 68; it reads PRGRRQPIPKV. A Phosphoserine; by host modification is found at S99. The interval 112 to 152 is important for endoplasmic reticulum and mitochondrial localization; that stretch reads PRRRSRNLGKVIDTLTCGFADLMGYIPLVGAPLGGAARALA. The residue at position 116 (S116) is a Phosphoserine; by host PKA. The segment at 122-173 is interaction with APOA2; it reads VIDTLTCGFADLMGYIPLVGAPLGGAARALAHGVRVLEDGVNYATGNLPGCS. The important for lipid droplets localization stretch occupies residues 164 to 167; that stretch reads YATG. The chain crosses the membrane as a helical span at residues 169 to 189; that stretch reads LPGCSFSIFLLALLSCLTVPA. The propeptide at 178–191 is ER anchor for the core protein, removed in mature form by host signal peptidase; the sequence is LLALLSCLTVPASA. Over 190–358 the chain is Lumenal; it reads SAYQVRNSTG…AGAHWGVLAG (169 aa). N196, N209, and N234 each carry an N-linked (GlcNAc...) asparagine; by host glycan. The segment at 265–296 is important for fusion; that stretch reads LVGSATLCSALYVGDLCGSVFLIGQLFTFSPR. An N-linked (GlcNAc...) asparagine; by host glycan is attached at N305. Residues 359–379 form a helical membrane-spanning segment; sequence IAYFSMVGNWAKVLVVLLLFA. Residues 380–725 are Lumenal-facing; sequence GVDAETIVSG…WEYVVLLFLL (346 aa). The interval 385–411 is HVR1; the sequence is TIVSGGQAARAMSGLVSLFTPGAKQNI. N-linked (GlcNAc...) (high mannose) asparagine; by host glycosylation is found at N417, N423, N430, and N448. 4 disulfide bridges follow: C429-C552, C452-C459, C486-C494, and C503-C508. Residues 474–479 are HVR2; the sequence is HANGSG. The interval 480–493 is CD81-binding 1; the sequence is PDQRPYCWHYPPKP. N-linked (GlcNAc...) (high mannose) asparagine; by host glycosylation occurs at N532. N-linked (GlcNAc...) asparagine; by host glycosylation is present at N540. Residues 544–551 are CD81-binding 2; that stretch reads PPLGNWFG. N556 is a glycosylation site (N-linked (GlcNAc...) (high mannose) asparagine; by host). C564 and C569 form a disulfide bridge. N576 carries N-linked (GlcNAc...) (high mannose) asparagine; by host glycosylation. Disulfide bonds link C581/C585, C597/C620, and C607/C644. N-linked (GlcNAc...) (high mannose) asparagine; by host glycosylation is found at N623 and N645. Cysteines 652 and 677 form a disulfide. Residues 660–671 are PKR/eIF2-alpha phosphorylation homology domain (PePHD); the sequence is SELSPLLLSTTQ. A helical transmembrane segment spans residues 726–746; sequence LADARVCSCLWMMLLISQAEA. Residues 747-757 lie on the Lumenal side of the membrane; the sequence is ALENLVILNAA. A helical transmembrane segment spans residues 758-778; the sequence is SLAGTRGLVSFLVFFCFAWYL. Residues 779 to 781 are Cytoplasmic-facing; that stretch reads KGR. Residues 782–803 traverse the membrane as a helical segment; the sequence is WVPGAAYALYGMWPLLLLLLAL. The Lumenal segment spans residues 804 to 813; the sequence is PQRAYALDTE. A helical membrane pass occupies residues 814–834; sequence VAASCGGVVLVGLMALTLSPY. Over 835–838 the chain is Cytoplasmic; sequence YKRC. Residues 839-859 form a helical membrane-spanning segment; it reads ISWCLWWLQYFLTRVEAQLHV. Over 860–881 the chain is Lumenal; it reads WVPPLNVRGGRDAVILLMCVVH. Residues 882–902 traverse the membrane as a helical segment; it reads PTLVFDITKLLLAVLGPLWIL. The Peptidase C18 domain maps to 903-1026; it reads QASLLKVPYF…GMVSKGWRLL (124 aa). Residues 903–1657 lie on the Cytoplasmic side of the membrane; that stretch reads QASLLKVPYF…CMSADLEVVT (755 aa). Residues 904-1206 form a protease NS2-3 region; that stretch reads ASLLKVPYFV…PVESLETTMR (303 aa). Residue C922 is the site of S-palmitoyl cysteine; by host attachment. An interaction with host SCPS1 region spans residues 929–949; it reads VGGHYVQMAIIKLGALTGTYV. Catalysis depends on for protease NS2 activity; shared with dimeric partner residues H952, E972, and C993. The Peptidase S29 domain maps to 1027–1208; it reads APITAYAQQT…ESLETTMRSP (182 aa). Residues H1083 and D1107 each act as charge relay system; for serine protease NS3 activity in the active site. Positions 1123 and 1125 each coordinate Zn(2+). S1165 acts as the Charge relay system; for serine protease NS3 activity in catalysis. Zn(2+) is bound by residues C1171 and H1175. The region spanning 1217 to 1369 is the Helicase ATP-binding domain; the sequence is PAVPQSFQVA…ANIEEVALST (153 aa). 1230-1237 contributes to the ATP binding site; that stretch reads APTGSGKS. S1237 and E1317 together coordinate Mg(2+). Positions 1316–1319 match the DECH box motif; the sequence is DECH. The segment at 1486–1497 is RNA-binding; the sequence is QRRGRTGRGKPG. The chain crosses the membrane as a helical span at residues 1658 to 1678; sequence STWVLVGGVLAALAAYCLSTG. The NS3-binding stretch occupies residues 1679–1690; sequence CVVIVGRIVLSG. Topologically, residues 1679-1805 are cytoplasmic; the sequence is CVVIVGRIVL…AVTSPLTTSQ (127 aa). The chain crosses the membrane as a helical span at residues 1806-1824; the sequence is TLLFNILGGWVAAQLAAPG. Residues 1825 to 1828 lie on the Lumenal side of the membrane; sequence AATA. A helical transmembrane segment spans residues 1829-1849; it reads FVGSGLAGAAVGSVGLGRVLV. Residue D1850 is a topological domain, cytoplasmic. A helical transmembrane segment spans residues 1851–1871; the sequence is ILAGYGAGVAGALVAFKIMSG. Residues 1872 to 1881 lie on the Lumenal side of the membrane; it reads ELPSTEDLVN. The chain crosses the membrane as a helical span at residues 1882–1902; it reads LLPAILSPGALVVGVVCAAIL. Over 1903 to 1972 the chain is Cytoplasmic; that stretch reads RRHVGPGEGA…WLSSESTTPC (70 aa). C1972 carries the S-palmitoyl cysteine; by host lipid modification. The stretch at 1973-2002 is an intramembrane region; it reads SGSWLRDIWDWICEVLSDFKTWLKTKLMPH. Residues 2003–2990 lie on the Cytoplasmic side of the membrane; it reads LPGIPFVSCQ…YHSVSHARPR (988 aa). C2011, C2029, C2031, and C2052 together coordinate Zn(2+). The tract at residues 2120–2208 is FKBP8-binding; sequence EFFTELDGVR…ASSSASQLSA (89 aa). The tract at residues 2120 to 2332 is transcriptional activation; the sequence is EFFTELDGVR…PVPPPRKKRT (213 aa). An interaction with non-structural protein 4A region spans residues 2135-2139; it reads PPCKP. The interval 2187–2207 is disordered; the sequence is GRRLARGSPPSEASSSASQLS. The tract at residues 2189–2441 is interaction with host SKP2; that stretch reads RLARGSPPSE…TPCAAEEQKL (253 aa). S2194 is modified (phosphoserine; by host; in p56). Residues S2197, S2201, S2204, S2207, and S2210 each carry the phosphoserine; by host; in p58 modification. The segment at 2210–2249 is ISDR; sequence SLKATCTINHDSPDAELIEANLLWRQEMGGNITRVESENK. The interaction with EIF2AK2/PKR stretch occupies residues 2210-2275; that stretch reads SLKATCTINH…REISVPAEIL (66 aa). Positions 2249–2306 are NS4B-binding; that stretch reads KVVILDSFDPLVAEEDEREISVPAEILRKSRRFTQALPIWARPDYNPPLIETWKKPNY. Positions 2312-2334 are disordered; that stretch reads HGCPLPPPQSPPVPPPRKKRTVV. The span at 2315–2326 shows a compositional bias: pro residues; that stretch reads PLPPPQSPPVPP. The SH3-binding motif lies at 2322–2325; sequence PPVP. Residues 2326–2334 carry the Nuclear localization signal motif; the sequence is PPRKKRTVV. Residue K2350 forms a Glycyl lysine isopeptide (Lys-Gly) (interchain with G-Cter in ubiquitin) linkage. Over residues 2351–2369 the composition is skewed to low complexity; the sequence is SFGSSSTSGITGDNTTTSS. The segment at 2351–2408 is disordered; it reads SFGSSSTSGITGDNTTTSSEPAPSGCSPDSDAESYSSMPPLEGEPGDPDLSDGSWSTV. Residues 2354 to 2377 are V3; sequence SSSTSGITGDNTTTSSEPAPSGCS. Residues S2449 and S2462 each carry the phosphoserine; by host modification. The region spanning 2634–2752 is the RdRp catalytic domain; that stretch reads PMGFSYDTRC…ICESAGVQED (119 aa). Positions 2640, 2738, and 2739 each coordinate Mg(2+). Residues 2991-3011 form a helical membrane-spanning segment; the sequence is WFWFCLLLLAAGVGIYLLPNR.

The protein belongs to the hepacivirus polyprotein family. In terms of assembly, homooligomer. Interacts with E1 (via C-terminus). Interacts with the non-structural protein 5A. Interacts (via N-terminus) with host STAT1 (via SH2 domain); this interaction results in decreased STAT1 phosphorylation and ubiquitin-mediated proteasome-dependent STAT1 degradation, leading to decreased IFN-stimulated gene transcription. Interacts with host STAT3; this interaction constitutively activates STAT3. Interacts with host LTBR receptor. Interacts with host TNFRSF1A receptor and possibly induces apoptosis. Interacts with host HNRPK. Interacts with host YWHAE. Interacts with host UBE3A/E6AP. Interacts with host DDX3X. Interacts with host APOA2. Interacts with host RXRA protein. Interacts with host SP110 isoform 3/Sp110b; this interaction sequesters the transcriptional corepressor SP110 away from the nucleus. Interacts with host CREB3 nuclear transcription protein; this interaction triggers cell transformation. Interacts with host ACY3. Interacts with host C1QR1. Interacts with host RBM24; this interaction, which enhances the interaction of the mature core protein with 5'-UTR, may inhibit viral translation and favor replication. Interacts with host EIF2AK2/PKR; this interaction induces the autophosphorylation of EIF2AK2. Part of the viral assembly initiation complex composed of NS2, E1, E2, NS3, NS4A, NS5A and the mature core protein. As to quaternary structure, forms a heterodimer with envelope glycoprotein E2. Interacts with mature core protein. Interacts with protease NS2. The heterodimer E1/E2 interacts with host CLDN1; this interaction plays a role in viral entry into host cell. Interacts with host SPSB2 (via C-terminus). Part of the viral assembly initiation complex composed of NS2, E1, E2, NS3, NS4A, NS5A and the mature core protein. Interacts with host NEURL3; this interaction prevents E1 binding to glycoprotein E2. Forms a heterodimer with envelope glycoprotein E1. Interacts with host CD81 and SCARB1 receptors; these interactions play a role in viral entry into host cell. Interacts with host EIF2AK2/PKR; this interaction inhibits EIF2AK2 and probably allows the virus to evade the innate immune response. Interacts with host CD209/DC-SIGN and CLEC4M/DC-SIGNR. Interact with host SPCS1; this interaction is essential for viral particle assembly. Interacts with protease NS2. The heterodimer E1/E2 interacts with host CLDN1; this interaction plays a role in viral entry into host cell. Part of the viral assembly initiation complex composed of NS2, E1, E2, NS3, NS4A, NS5A and the mature core protein. Interacts with host SLC3A2/4F2hc; the interaction may facilitate viral entry into host cell. Interacts with human PLSCR1. In terms of assembly, homohexamer. Homoheptamer. Interacts with protease NS2. As to quaternary structure, homodimer. Interacts with host SPCS1; this interaction is essential for viral particle assembly. Interacts with envelope glycoprotein E1. Interacts with envelope glycoprotein E2. Interacts with viroporin p7. Interacts with serine protease/helicase NS3. Part of the replication complex composed of NS2, NS3, NS4A, NS4B, NS5A and the RNA-directed RNA polymerase embedded in an ER-derived membranous web. Part of the viral assembly initiation complex composed of NS2, E1, E2, NS3, NS4A, NS5A and the mature core protein. Interacts with protease NS2. Interacts with non-structural protein 4A; this interaction stabilizes the folding of NS3 serine protease. NS3-NS4A interaction is essential for NS3 activation and allows membrane anchorage of the latter. NS3/NS4A complex also prevents phosphorylation of host IRF3, thus preventing the establishment of dsRNA induced antiviral state. Interacts with host MAVS; this interaction leads to the cleavage and inhibition of host MAVS. Interacts with host TICAM1; this interaction leads to the cleavage and inhibition of host TICAM1. Interacts with host TANK-binding kinase/TBK1; this interaction results in the inhibition of the association between TBK1 and IRF3, which leads to the inhibition of IRF3 activation. Interacts with host RBM24. Part of the replication complex composed of NS2, NS3, NS4A, NS4B, NS5A and the RNA-directed RNA polymerase embedded in an ER-derived membranous web. Part of the viral assembly initiation complex composed of NS2, E1, E2, NS3, NS4A, NS5A and the mature core protein. In terms of assembly, interacts with NS3 serine protease; this interaction stabilizes the folding of NS3 serine protease. NS3-NS4A interaction is essential for NS3 activation and allows membrane anchorage of the latter. Interacts with non-structural protein 5A (via N-terminus). Part of the replication complex composed of NS2, NS3, NS4A, NS4B, NS5A and the RNA-directed RNA polymerase embedded in an ER-derived membranous web. Part of the viral assembly initiation complex composed of NS2, E1, E2, NS3, NS4A, NS5A and the mature core protein. As to quaternary structure, homomultimer. Interacts with non-structural protein NS5A. Interacts with host PLA2G4C; this interaction likely initiates the recruitment of replication complexes to lipid droplets. Interacts with host STING; this interaction disrupts the interaction between STING and TBK1 thereby suppressing the interferon signaling. Part of the replication complex composed of NS2, NS3, NS4A, NS4B, NS5A and the RNA-directed RNA polymerase embedded in an ER-derived membranous web. Monomer. Homodimer; dimerization is required for RNA-binding. Interacts with the mature core protein. Interacts (via N-terminus) with non-structural protein 4A. Interacts with non-structural protein 4B. Interacts (via region D2) with RNA-directed RNA polymerase. Part of the viral assembly initiation complex composed of NS2, E1, E2, NS3, NS4A, NS5A and the mature core protein. Part of the replication complex composed of NS2, NS3, NS4A, NS4B, NS5A and the RNA-directed RNA polymerase embedded in an ER-derived membranous web. Interacts with host GRB2. Interacts with host BIN1. Interacts with host PIK3R1. Interacts with host SRCAP. Interacts with host FKBP8. Interacts (via C-terminus) with host VAPB (via MSP domain). Interacts with host EIF2AK2/PKR; this interaction leads to disruption of EIF2AK2 dimerization by NS5A and probably allows the virus to evade the innate immune response. Interacts (via N-terminus) with host PACSIN2 (via N-terminus); this interaction attenuates protein kinase C alpha-mediated phosphorylation of PACSIN2 by disrupting the interaction between PACSIN2 and PRKCA. Interacts (via N-terminus) with host SRC kinase (via SH2 domain). Interacts with most Src-family kinases. Interacts with host IFI27 and SKP2; promotes the ubiquitin-mediated proteasomal degradation of NS5A. Interacts with host GPS2. Interacts with host TNFRSF21; this interaction allows the modulation by the virus of JNK, p38 MAPK, STAT3, and Akt signaling pathways in a DR6-dependent manner. Interacts (via N-terminus) with host CIDEB (via N-terminus); this interaction seems to regulate the association of HCV particles with APOE. Interacts with host CHKA/Choline Kinase-alpha; CHKA bridges host PI4KA and NS5A and potentiates NS5A-stimulated PI4KA activity, which then facilitates the targeting of the ternary complex to the ER for viral replication. Interacts with host SPSB2 (via C-terminus); this interaction targets NS5A for ubiquitination and degradation. Interacts with host RAB18; this interaction may promote the association of NS5A and other replicase components with lipid droplets. Interacts (via region D2) with host PPIA/CYPA; the interaction stimulates RNA-binding ability of NS5A and is dependent on the peptidyl-prolyl cis-trans isomerase activity of PPIA/CYPA. Interacts with host TRIM14; this interaction induces the degradation of NS5A. In terms of assembly, homooligomer. Interacts with non-structural protein 5A. Interacts with host VAPB. Interacts with host PRK2/PKN2. Interacts with host HNRNPA1 and SEPT6; these interactions facilitate viral replication. Part of the replication complex composed of NS2, NS3, NS4A, NS4B, NS5A and the RNA-directed RNA polymerase. Zn(2+) serves as cofactor. It depends on Mg(2+) as a cofactor. Specific enzymatic cleavages in vivo yield mature proteins. The structural proteins, core, E1, E2 and p7 are produced by proteolytic processing by host signal peptidases. The core protein precursor is synthesized as a 23 kDa, which is retained in the ER membrane through the hydrophobic signal peptide. Cleavage by the signal peptidase releases the 21 kDa mature core protein. The cleavage of the core protein precursor occurs between aminoacids 176 and 188 but the exact cleavage site is not known. Some degraded forms of the core protein appear as well during the course of infection. The other proteins (p7, NS2, NS3, NS4A, NS4B, NS5A and NS5B) are cleaved by the viral proteases. Autoprocessing between NS2 and NS3 is mediated by the NS2 cysteine protease catalytic domain and regulated by the NS3 N-terminal domain. Post-translationally, phosphorylated by host PKC and PKA. In terms of processing, ubiquitinated; mediated by UBE3A and leading to core protein subsequent proteasomal degradation. Highly N-glycosylated. Post-translationally, palmitoylation is required for NS2/3 autoprocessing and E2 recruitment to membranes. In terms of processing, palmitoylated. This modification may play a role in its polymerization or in protein-protein interactions. Phosphorylated on serines in a basal form termed p56. p58 is a hyperphosphorylated form of p56. p56 and p58 coexist in the cell in roughly equivalent amounts. Hyperphosphorylation is dependent on the presence of NS4A. Host CSNK1A1/CKI-alpha or RPS6KB1 kinases may be responsible for NS5A phosphorylation. Post-translationally, tyrosine phosphorylation is essential for the interaction with host SRC. In terms of processing, the N-terminus is phosphorylated by host PRK2/PKN2.

Its subcellular location is the host endoplasmic reticulum membrane. It is found in the host mitochondrion membrane. The protein resides in the virion. It localises to the host cytoplasm. The protein localises to the host nucleus. Its subcellular location is the host lipid droplet. It is found in the virion membrane. The protein resides in the host mitochondrion. It localises to the host cell membrane. The protein localises to the host perinuclear region. The catalysed reaction is Hydrolysis of four peptide bonds in the viral precursor polyprotein, commonly with Asp or Glu in the P6 position, Cys or Thr in P1 and Ser or Ala in P1'.. It catalyses the reaction a ribonucleoside 5'-triphosphate + H2O = a ribonucleoside 5'-diphosphate + phosphate + H(+). The enzyme catalyses ATP + H2O = ADP + phosphate + H(+). It carries out the reaction RNA(n) + a ribonucleoside 5'-triphosphate = RNA(n+1) + diphosphate. Its activity is regulated as follows. Inhibited by the antiviral drug hexamethylene amiloride. Inhibition by amantadine appears to be genotype-dependent. Also inhibited by long-alkyl-chain iminosugar derivatives. With respect to regulation, activity is up-regulated by PRK2/PKN2-mediated phosphorylation. Its function is as follows. Packages viral RNA to form a viral nucleocapsid, and promotes virion budding. Participates in the viral particle production as a result of its interaction with the non-structural protein 5A. Binds RNA and may function as a RNA chaperone to induce the RNA structural rearrangements taking place during virus replication. Modulates viral translation initiation by interacting with viral IRES and 40S ribosomal subunit. Affects various cell signaling pathways, host immunity and lipid metabolism. Prevents the establishment of cellular antiviral state by blocking the interferon-alpha/beta (IFN-alpha/beta) and IFN-gamma signaling pathways and by blocking the formation of phosphorylated STAT1 and promoting ubiquitin-mediated proteasome-dependent degradation of STAT1. Activates STAT3 leading to cellular transformation. Regulates the activity of cellular genes, including c-myc and c-fos. May repress the promoter of p53, and sequester CREB3 and SP110 isoform 3/Sp110b in the cytoplasm. Represses cell cycle negative regulating factor CDKN1A, thereby interrupting an important check point of normal cell cycle regulation. Targets transcription factors involved in the regulation of inflammatory responses and in the immune response: suppresses TNF-induced NF-kappa-B activation, and activates AP-1. Binds to dendritic cells (DCs) via C1QR1, resulting in down-regulation of T-lymphocytes proliferation. Alters lipid metabolism by interacting with hepatocellular proteins involved in lipid accumulation and storage. Induces up-regulation of FAS promoter activity, and thereby contributes to the increased triglyceride accumulation in hepatocytes (steatosis). Functionally, forms a heterodimer with envelope glycoprotein E2, which mediates virus attachment to the host cell, virion internalization through clathrin-dependent endocytosis and fusion with host membrane. Fusion with the host cell is most likely mediated by both E1 and E2, through conformational rearrangements of the heterodimer required for fusion rather than a classical class II fusion mechanism. E1/E2 heterodimer binds host apolipoproteins such as APOB and ApoE thereby forming a lipo-viro-particle (LVP). APOE associated to the LVP allows the initial virus attachment to cell surface receptors such as the heparan sulfate proteoglycans (HSPGs), syndecan-1 (SDC1), syndecan-1 (SDC2), the low-density lipoprotein receptor (LDLR) and scavenger receptor class B type I (SCARB1). The cholesterol transfer activity of SCARB1 allows E2 exposure and binding of E2 to SCARB1 and the tetraspanin CD81. E1/E2 heterodimer binding on CD81 activates the epithelial growth factor receptor (EGFR) signaling pathway. Diffusion of the complex E1-E2-EGFR-SCARB1-CD81 to the cell lateral membrane allows further interaction with Claudin 1 (CLDN1) and occludin (OCLN) to finally trigger HCV entry. Forms a heterodimer with envelope glycoprotein E1, which mediates virus attachment to the host cell, virion internalization through clathrin-dependent endocytosis and fusion with host membrane. Fusion with the host cell is most likely mediated by both E1 and E2, through conformational rearrangements of the heterodimer required for fusion rather than a classical class II fusion mechanism. The interaction between envelope glycoprotein E2 and host apolipoprotein E/APOE allows the proper assembly, maturation and infectivity of the viral particles. This interaction is probably promoted via the up-regulation of cellular autophagy by the virus. E1/E2 heterodimer binds host apolipoproteins such as APOB and APOE thereby forming a lipo-viro-particle (LVP). APOE associated to the LVP allows the initial virus attachment to cell surface receptors such as the heparan sulfate proteoglycans (HSPGs), syndecan-1 (SDC1), syndecan-1 (SDC2), the low-density lipoprotein receptor (LDLR) and scavenger receptor class B type I (SCARB1). The cholesterol transfer activity of SCARB1 allows E2 exposure and binding of E2 to SCARB1 and the tetraspanin CD81. E1/E2 heterodimer binding on CD81 activates the epithelial growth factor receptor (EGFR) signaling pathway. Diffusion of the complex E1-E2-EGFR-SCARB1-CD81 to the cell lateral membrane allows further interaction with Claudin 1 (CLDN1) and occludin (OCLN) to finally trigger HCV entry. Inhibits host EIF2AK2/PKR activation, preventing the establishment of an antiviral state. Viral ligand for CD209/DC-SIGN and CLEC4M/DC-SIGNR, which are respectively found on dendritic cells (DCs), and on liver sinusoidal endothelial cells and macrophage-like cells of lymph node sinuses. These interactions allow the capture of circulating HCV particles by these cells and subsequent facilitated transmission to permissive cells such as hepatocytes and lymphocyte subpopulations. The interaction between E2 and host amino acid transporter complex formed by SLC3A2 and SLC7A5/LAT1 may facilitate viral entry into host cell. In terms of biological role, ion channel protein that acts as a viroporin and plays an essential role in the assembly, envelopment and secretion of viral particles. Regulates the host cell secretory pathway, which induces the intracellular retention of viral glycoproteins and favors assembly of viral particles. Creates a pore in acidic organelles and releases Ca(2+) and H(+) in the cytoplasm of infected cells, leading to a productive viral infection. High levels of cytoplasmic Ca(2+) may trigger membrane trafficking and transport of viral ER-associated proteins to viroplasms, sites of viral genome replication. This ionic imbalance induces the assembly of the inflammasome complex, which triggers the maturation of pro-IL-1beta into IL-1beta through the action of caspase-1. Targets also host mitochondria and induces mitochondrial depolarization. In addition of its role as a viroporin, acts as a lipid raft adhesion factor. Its function is as follows. Cysteine protease required for the proteolytic auto-cleavage between the non-structural proteins NS2 and NS3. The N-terminus of NS3 is required for the function of NS2 protease (active region NS2-3). Promotes the initiation of viral particle assembly by mediating the interaction between structural and non-structural proteins. Functionally, displays three enzymatic activities: serine protease with a chymotrypsin-like fold, NTPase and RNA helicase. NS3 serine protease, in association with NS4A, is responsible for the cleavages of NS3-NS4A, NS4A-NS4B, NS4B-NS5A and NS5A-NS5B. The NS3/NS4A complex prevents phosphorylation of host IRF3, thus preventing the establishment of dsRNA induced antiviral state. The NS3/NS4A complex induces host amino acid transporter component SLC3A2, thus contributing to HCV propagation. NS3 RNA helicase binds to RNA and unwinds both dsDNA and dsRNA in the 3' to 5' direction, and likely resolves RNA complicated stable secondary structures in the template strand. Binds a single ATP and catalyzes the unzipping of a single base pair of dsRNA. Inhibits host antiviral proteins TBK1 and IRF3 thereby preventing the establishment of an antiviral state. Cleaves host MAVS/CARDIF thereby preventing the establishment of an antiviral state. Cleaves host TICAM1/TRIF, thereby disrupting TLR3 signaling and preventing the establishment of an antiviral state. Induces a specific membrane alteration that serves as a scaffold for the virus replication complex. This membrane alteration gives rise to the so-called ER-derived membranous web that contains the replication complex. NS4B self-interaction contributes to its function in membranous web formation. Promotes host TRIF protein degradation in a CASP8-dependent manner thereby inhibiting host TLR3-mediated interferon signaling. Disrupts the interaction between STING and TBK1 contributing to the inhibition of interferon signaling. In terms of biological role, phosphorylated protein that is indispensable for viral replication and assembly. Both hypo- and hyperphosphorylated states are required for the viral life cycle. The hyperphosphorylated form of NS5A is an inhibitor of viral replication. Involved in RNA-binding and especially in binding to the viral genome. Zinc is essential for RNA-binding. Participates in the viral particle production as a result of its interaction with the mature viral core protein. Its interaction with host VAPB may target the viral replication complex to vesicles. Down-regulates viral IRES translation initiation. Mediates interferon resistance, presumably by interacting with and inhibiting host EIF2AK2/PKR. Prevents BIN1-induced apoptosis. Acts as a transcriptional activator of some host genes important for viral replication when localized in the nucleus. Via the interaction with host PACSIN2, modulates lipid droplet formation in order to promote virion assembly. Modulates TNFRSF21/DR6 signaling pathway for viral propagation. Its function is as follows. RNA-dependent RNA polymerase that performs primer-template recognition and RNA synthesis during viral replication. Initiates RNA transcription/replication at a flavin adenine dinucleotide (FAD), resulting in a 5'- FAD cap on viral RNAs. In this way, recognition of viral 5' RNA by host pattern recognition receptors can be bypassed, thereby evading activation of antiviral pathways. This chain is Genome polyprotein, found in Hepatitis C virus genotype 1b (isolate HC-J1) (HCV).